We begin with the raw amino-acid sequence, 273 residues long: Dermonecrotic toxin LdSicTox-alphaIB1bi (273 aa).

H5 is a catalytic residue. Residues E25 and D27 each coordinate Mg(2+). H41 (nucleophile) is an active-site residue. 2 disulfides stabilise this stretch: C45-C51 and C47-C190. D85 contributes to the Mg(2+) binding site. N250 carries an N-linked (GlcNAc...) asparagine glycan.

The protein belongs to the arthropod phospholipase D family. Class II subfamily. It depends on Mg(2+) as a cofactor. Expressed by the venom gland.

It is found in the secreted. It carries out the reaction an N-(acyl)-sphingosylphosphocholine = an N-(acyl)-sphingosyl-1,3-cyclic phosphate + choline. The catalysed reaction is an N-(acyl)-sphingosylphosphoethanolamine = an N-(acyl)-sphingosyl-1,3-cyclic phosphate + ethanolamine. It catalyses the reaction a 1-acyl-sn-glycero-3-phosphocholine = a 1-acyl-sn-glycero-2,3-cyclic phosphate + choline. The enzyme catalyses a 1-acyl-sn-glycero-3-phosphoethanolamine = a 1-acyl-sn-glycero-2,3-cyclic phosphate + ethanolamine. Its function is as follows. Dermonecrotic toxins cleave the phosphodiester linkage between the phosphate and headgroup of certain phospholipids (sphingolipid and lysolipid substrates), forming an alcohol (often choline) and a cyclic phosphate. This toxin acts on sphingomyelin (SM). It may also act on ceramide phosphoethanolamine (CPE), lysophosphatidylcholine (LPC) and lysophosphatidylethanolamine (LPE), but not on lysophosphatidylserine (LPS), and lysophosphatidylglycerol (LPG). It acts by transphosphatidylation, releasing exclusively cyclic phosphate products as second products. Induces dermonecrosis, hemolysis, increased vascular permeability, edema, inflammatory response, and platelet aggregation. In Loxosceles deserta (Desert recluse spider), this protein is Dermonecrotic toxin LdSicTox-alphaIB1bi.